A 256-amino-acid polypeptide reads, in one-letter code: Phosphatidylglycerol--prolipoprotein diacylglyceryl transferase 2 (256 aa).

Helical transmembrane passes span 11-31 (LKIY…TLLF), 46-66 (FNAT…LYII), and 83-103 (FGNG…IALC). R130 provides a ligand contact to a 1,2-diacyl-sn-glycero-3-phospho-(1'-sn-glycerol). 3 helical membrane passes run 142-162 (AETT…PAGV), 164-184 (LYPT…FLLW), and 221-241 (VGLL…GILL).

The protein belongs to the Lgt family.

Its subcellular location is the cell membrane. It catalyses the reaction L-cysteinyl-[prolipoprotein] + a 1,2-diacyl-sn-glycero-3-phospho-(1'-sn-glycerol) = an S-1,2-diacyl-sn-glyceryl-L-cysteinyl-[prolipoprotein] + sn-glycerol 1-phosphate + H(+). The protein operates within protein modification; lipoprotein biosynthesis (diacylglyceryl transfer). In terms of biological role, catalyzes the transfer of the diacylglyceryl group from phosphatidylglycerol to the sulfhydryl group of the N-terminal cysteine of a prolipoprotein, the first step in the formation of mature lipoproteins. This Clostridium perfringens (strain 13 / Type A) protein is Phosphatidylglycerol--prolipoprotein diacylglyceryl transferase 2.